We begin with the raw amino-acid sequence, 214 residues long: uncharacterized protein (214 aa).

The interval 131–214 (TEDILSPPSP…SSSSDSLDAY (84 aa)) is disordered. Residues 174–189 (HRRRRTRRQLRYRQRV) are compositionally biased toward basic residues. Residues 197–214 (DLGEPLESSSSSDSLDAY) show a composition bias toward low complexity.

This is an uncharacterized protein from Tupaia.